Here is a 207-residue protein sequence, read N- to C-terminus: Dephospho-CoA kinase (207 aa).

The DPCK domain maps to 10 to 207 (ILGLTGGIGS…FYLTLRGGQP (198 aa)). 18 to 23 (GSGKSA) serves as a coordination point for ATP.

It belongs to the CoaE family.

Its subcellular location is the cytoplasm. The catalysed reaction is 3'-dephospho-CoA + ATP = ADP + CoA + H(+). The protein operates within cofactor biosynthesis; coenzyme A biosynthesis; CoA from (R)-pantothenate: step 5/5. Functionally, catalyzes the phosphorylation of the 3'-hydroxyl group of dephosphocoenzyme A to form coenzyme A. The sequence is that of Dephospho-CoA kinase from Pseudomonas putida (Arthrobacter siderocapsulatus).